The following is a 138-amino-acid chain: Putative pre-16S rRNA nuclease (138 aa).

The protein belongs to the YqgF nuclease family.

The protein resides in the cytoplasm. Functionally, could be a nuclease involved in processing of the 5'-end of pre-16S rRNA. The sequence is that of Putative pre-16S rRNA nuclease from Escherichia coli O45:K1 (strain S88 / ExPEC).